A 207-amino-acid chain; its full sequence is Large ribosomal subunit protein bL9 (207 aa).

The span at 162–176 (QKKEEKAKDEVSATE) shows a compositional bias: basic and acidic residues. The segment at 162 to 207 (QKKEEKAKDEVSATEKDEELMLSSVTNDNDGDGAKEIVVEGTEESQ) is disordered.

Belongs to the bacterial ribosomal protein bL9 family.

In terms of biological role, binds to the 23S rRNA. The protein is Large ribosomal subunit protein bL9 of Ehrlichia ruminantium (strain Gardel).